A 267-amino-acid polypeptide reads, in one-letter code: Non-structural protein NS-S (267 aa).

This sequence belongs to the phlebovirus NS-S protein family.

This chain is Non-structural protein NS-S (NSS), found in Homo sapiens (Human).